The chain runs to 619 residues: Eukaryotic translation initiation factor 2-alpha kinase 1 (619 aa).

The interval 1–40 (MLGGSSVDGERDTDDDAAGAVAAPPAIDFPAEVSDPKYDE) is disordered. Residues 18-28 (AGAVAAPPAID) are compositionally biased toward low complexity. The short motif at 85–104 (LHSKQVFKLLCQTFIKMGLL) is the SIFI-degron element. The Protein kinase domain occupies 167-580 (FEELAILGKG…ALQLLQSELF (414 aa)). Residues 173 to 181 (LGKGGYGRV) and lysine 196 contribute to the ATP site. Threonine 283 carries the phosphothreonine modification. Residues 408–413 (ACPYVM) form an HRM 1 repeat. Catalysis depends on aspartate 440, which acts as the Proton acceptor. Residues threonine 483, threonine 485, and threonine 490 each carry the phosphothreonine; by autocatalysis modification. The stretch at 549–554 (RCPVQA) is one HRM 2 repeat.

This sequence belongs to the protein kinase superfamily. Ser/Thr protein kinase family. GCN2 subfamily. Synthesized in an inactive form that binds to the N-terminal domain of CDC37. Has to be associated with a multiprotein complex containing Hsp90, CDC37 and PPP5C for maturation and activation by autophosphorylation. The phosphatase PPP5C modulates this activation. Homodimer; homodimerizes in presence of heme, forming a disulfide-linked inactive homodimer. Interacts with DELE1; binds both to full-length DELE1 and processed form of DELE1 (S-DELE1) in response to stress, leading to activate its protein kinase activity and trigger the integrated stress response (ISR). Activated by autophosphorylation; phosphorylated predominantly on serine and threonine residues, but also on tyrosine residues. Autophosphorylation at Thr-485 is required for kinase activation. The active autophosphorylated form apparently is largely refractory to cellular heme fluctuations. Post-translationally, ubiquitinated and degraded by the SIFI complex once the mitochondrial stress has been resolved, thereby providing stress response silencing. Within the SIFI complex, UBR4 initiates ubiquitin chain that are further elongated or branched by KCMF1. As to expression, expressed predominantly in erythroid cells, mature reticulocytes, as well as fetal liver nucleated erythroid cells. At much lower levels, expressed in hepatocytes and bone marrow-derived macrophages (at protein level).

It is found in the cytoplasm. It catalyses the reaction L-seryl-[protein] + ATP = O-phospho-L-seryl-[protein] + ADP + H(+). It carries out the reaction L-threonyl-[protein] + ATP = O-phospho-L-threonyl-[protein] + ADP + H(+). In normal conditions, the protein kinase activity is inhibited; inhibition is relieved by various stress conditions. Inhibited by heme: in presence of heme, forms a disulfide-linked inactive homodimer. Heme depletion relieves inhibition and stimulates kinase activity by autophosphorylation. Inhibited by the heme metabolites biliverdin and bilirubin. Induced by oxidative stress generated by arsenite treatment. Binding of nitric oxide (NO) to the heme iron in the N-terminal heme-binding domain activates the kinase activity, while binding of carbon monoxide (CO) suppresses kinase activity. Protein kinase activity is also activated upon binding to DELE1 in response to various stress, triggering the integrated stress response (ISR): activated by full-length DELE1 in response to iron deficiency, while it is activated by the processed form of DELE1 (S-DELE1) in response to mitochondrial stress. Metabolic-stress sensing protein kinase that phosphorylates the alpha subunit of eukaryotic translation initiation factor 2 (EIF2S1/eIF-2-alpha) in response to various stress conditions. Key activator of the integrated stress response (ISR) required for adaptation to various stress, such as heme deficiency, oxidative stress, osmotic shock, mitochondrial dysfunction and heat shock. EIF2S1/eIF-2-alpha phosphorylation in response to stress converts EIF2S1/eIF-2-alpha in a global protein synthesis inhibitor, leading to a global attenuation of cap-dependent translation, while concomitantly initiating the preferential translation of ISR-specific mRNAs, such as the transcriptional activator ATF4, and hence allowing ATF4-mediated reprogramming. Acts as a key sensor of heme-deficiency: in normal conditions, binds hemin via a cysteine thiolate and histidine nitrogenous coordination, leading to inhibit the protein kinase activity. This binding occurs with moderate affinity, allowing it to sense the heme concentration within the cell: heme depletion relieves inhibition and stimulates kinase activity, activating the ISR. Thanks to this unique heme-sensing capacity, plays a crucial role to shut off protein synthesis during acute heme-deficient conditions. In red blood cells (RBCs), controls hemoglobin synthesis ensuring a coordinated regulation of the synthesis of its heme and globin moieties. It thereby plays an essential protective role for RBC survival in anemias of iron deficiency. Iron deficiency also triggers activation by full-length DELE1. Also activates the ISR in response to mitochondrial dysfunction: HRI/EIF2AK1 protein kinase activity is activated upon binding to the processed form of DELE1 (S-DELE1), thereby promoting the ATF4-mediated reprogramming. Also acts as an activator of mitophagy in response to mitochondrial damage: catalyzes phosphorylation of eIF-2-alpha (EIF2S1) following activation by S-DELE1, thereby promoting mitochondrial localization of EIF2S1, triggering PRKN-independent mitophagy. This is Eukaryotic translation initiation factor 2-alpha kinase 1 from Mus musculus (Mouse).